The following is a 118-amino-acid chain: Large ribosomal subunit protein uL18 (118 aa).

A disordered region spans residues 1 to 24 (MISKPDKNKIRQKRHRRVRGKLSG). Residues 10-20 (IRQKRHRRVRG) are compositionally biased toward basic residues.

This sequence belongs to the universal ribosomal protein uL18 family. In terms of assembly, part of the 50S ribosomal subunit; part of the 5S rRNA/L5/L18/L25 subcomplex. Contacts the 5S and 23S rRNAs.

In terms of biological role, this is one of the proteins that bind and probably mediate the attachment of the 5S RNA into the large ribosomal subunit, where it forms part of the central protuberance. The chain is Large ribosomal subunit protein uL18 from Streptococcus agalactiae serotype III (strain NEM316).